A 254-amino-acid chain; its full sequence is Proteasome subunit alpha (254 aa).

The disordered stretch occupies residues 234–254 (EEMLPTPAATEDAPANGDAPS).

Belongs to the peptidase T1A family. As to quaternary structure, the 20S proteasome core is composed of 14 alpha and 14 beta subunits that assemble into four stacked heptameric rings, resulting in a barrel-shaped structure. The two inner rings, each composed of seven catalytic beta subunits, are sandwiched by two outer rings, each composed of seven alpha subunits. The catalytic chamber with the active sites is on the inside of the barrel. Has a gated structure, the ends of the cylinder being occluded by the N-termini of the alpha-subunits. Is capped by the proteasome-associated ATPase, ARC.

Its subcellular location is the cytoplasm. It functions in the pathway protein degradation; proteasomal Pup-dependent pathway. With respect to regulation, the formation of the proteasomal ATPase ARC-20S proteasome complex, likely via the docking of the C-termini of ARC into the intersubunit pockets in the alpha-rings, may trigger opening of the gate for substrate entry. Interconversion between the open-gate and close-gate conformations leads to a dynamic regulation of the 20S proteasome proteolysis activity. Functionally, component of the proteasome core, a large protease complex with broad specificity involved in protein degradation. The sequence is that of Proteasome subunit alpha from Rhodococcus erythropolis (strain PR4 / NBRC 100887).